A 595-amino-acid chain; its full sequence is Sulfite reductase [NADPH] flavoprotein alpha-component (595 aa).

The 139-residue stretch at 59 to 197 (ITVLSASQTG…KADIWRREIV (139 aa)) folds into the Flavodoxin-like domain. FMN contacts are provided by residues 65-70 (SQTGNA), 112-115 (STQG), and 148-157 (LGDSSYTYFA). Residues 230-444 (EEPFTAHLVV…IEHNDNFRLP (215 aa)) enclose the FAD-binding FR-type domain. FAD contacts are provided by residues Thr318, Phe352, 382 to 385 (RLYS), 400 to 402 (TVS), Tyr406, and 415 to 418 (GGAS). NADP(+) contacts are provided by residues 515-516 (SQ), 521-525 (KIYVQ), and Asp557. Residue Tyr595 coordinates FAD.

The protein belongs to the NADPH-dependent sulphite reductase flavoprotein subunit CysJ family. In the N-terminal section; belongs to the flavodoxin family. It in the C-terminal section; belongs to the flavoprotein pyridine nucleotide cytochrome reductase family. In terms of assembly, alpha(8)-beta(8). The alpha component is a flavoprotein, the beta component is a hemoprotein. The cofactor is FAD. FMN serves as cofactor.

It catalyses the reaction hydrogen sulfide + 3 NADP(+) + 3 H2O = sulfite + 3 NADPH + 4 H(+). The protein operates within sulfur metabolism; hydrogen sulfide biosynthesis; hydrogen sulfide from sulfite (NADPH route): step 1/1. Its function is as follows. Component of the sulfite reductase complex that catalyzes the 6-electron reduction of sulfite to sulfide. This is one of several activities required for the biosynthesis of L-cysteine from sulfate. The flavoprotein component catalyzes the electron flow from NADPH -&gt; FAD -&gt; FMN to the hemoprotein component. This Baumannia cicadellinicola subsp. Homalodisca coagulata protein is Sulfite reductase [NADPH] flavoprotein alpha-component.